The sequence spans 418 residues: F420-non-reducing hydrogenase vhu subunit A (418 aa).

Ni(2+) is bound by residues Cys-61 and Cys-64.

Belongs to the [NiFe]/[NiFeSe] hydrogenase large subunit family. The F420-non-reducing hydrogenase vhu is composed of four subunits; VhuA, VhuD, VhuG and VhuU. The cofactor is Ni(2+).

The sequence is that of F420-non-reducing hydrogenase vhu subunit A (vhuA) from Methanocaldococcus jannaschii (strain ATCC 43067 / DSM 2661 / JAL-1 / JCM 10045 / NBRC 100440) (Methanococcus jannaschii).